The sequence spans 199 residues: Small ribosomal subunit protein uS2 (199 aa).

Belongs to the universal ribosomal protein uS2 family.

This is Small ribosomal subunit protein uS2 (rps2) from Thermoplasma volcanium (strain ATCC 51530 / DSM 4299 / JCM 9571 / NBRC 15438 / GSS1).